A 338-amino-acid polypeptide reads, in one-letter code: DNA-directed RNA polymerase subunit alpha (338 aa).

The interval 1-226 (MLIAQRPTLS…ELFGLARELN (226 aa)) is alpha N-terminal domain (alpha-NTD). Residues 240-338 (DEQLAADLAL…DDAFVEDEQY (99 aa)) are alpha C-terminal domain (alpha-CTD).

It belongs to the RNA polymerase alpha chain family. In terms of assembly, homodimer. The RNAP catalytic core consists of 2 alpha, 1 beta, 1 beta' and 1 omega subunit. When a sigma factor is associated with the core the holoenzyme is formed, which can initiate transcription.

The catalysed reaction is RNA(n) + a ribonucleoside 5'-triphosphate = RNA(n+1) + diphosphate. Its function is as follows. DNA-dependent RNA polymerase catalyzes the transcription of DNA into RNA using the four ribonucleoside triphosphates as substrates. This chain is DNA-directed RNA polymerase subunit alpha, found in Nocardioides sp. (strain ATCC BAA-499 / JS614).